A 502-amino-acid polypeptide reads, in one-letter code: Protein GIS3 (502 aa).

The protein resides in the cytoplasm. It localises to the nucleus. This is Protein GIS3 (GIS3) from Saccharomyces cerevisiae (strain ATCC 204508 / S288c) (Baker's yeast).